The sequence spans 544 residues: Phenylalanine--tRNA ligase beta subunit (544 aa).

Positions 270–346 (LEPKTRFLTK…KGYGYENIKV (77 aa)) constitute a B5 domain. Asp324, Asp330, Glu333, and Asp334 together coordinate Mg(2+).

It belongs to the phenylalanyl-tRNA synthetase beta subunit family. Type 2 subfamily. As to quaternary structure, tetramer of two alpha and two beta subunits. It depends on Mg(2+) as a cofactor.

It localises to the cytoplasm. It catalyses the reaction tRNA(Phe) + L-phenylalanine + ATP = L-phenylalanyl-tRNA(Phe) + AMP + diphosphate + H(+). In Methanosarcina barkeri (strain Fusaro / DSM 804), this protein is Phenylalanine--tRNA ligase beta subunit.